The primary structure comprises 162 residues: Caveolin-2 (162 aa).

The Cytoplasmic portion of the chain corresponds to Met1–Lys86. At Tyr19 the chain carries Phosphotyrosine; by SRC. 2 positions are modified to phosphoserine: Ser20 and Ser23. The residue at position 27 (Tyr27) is a Phosphotyrosine; by SRC. Residue Ser36 is modified to Phosphoserine. The helical intramembrane region spans Phe87–Leu107. The Cytoplasmic portion of the chain corresponds to Ser108–Asp162.

This sequence belongs to the caveolin family. Monomer or homodimer. Interacts with CAV1; the interaction forms a stable heterooligomeric complex that is required for targeting to lipid rafts and for caveolae formation. Tyrosine phosphorylated forms do not form heterooligomers with the Tyr-19-phosphorylated form existing as a monomer or dimer, and the Tyr-27-form as a monomer only. Interacts (tyrosine phosphorylated form) with the SH2 domain-containing proteins, RASA1, NCK1 and SRC. Interacts (tyrosine phosphorylated form) with INSR, the interaction (Tyr-27-phosphorylated form) is increased on insulin stimulation. Interacts (Tyr-19 phosphorylated form) with MAPK1 (phosphorylated form); the interaction, promoted by insulin, leads to nuclear location and MAPK1 activation. Interacts with STAT3; the interaction is increased on insulin-induced tyrosine phosphorylation leading to STAT activation. In terms of processing, phosphorylated on serine and tyrosine residues. CAV1 promotes phosphorylation on Ser-23 which then targets the complex to the plasma membrane, lipid rafts and caveolae. Phosphorylation on Ser-36 appears to modulate mitosis in endothelial cells. Phosphorylation on both Tyr-19 and Tyr-27 is required for insulin-induced 'Ser-727' phosphorylation of STAT3 and its activation. Phosphorylation on Tyr-19 is required for insulin-induced phosphorylation of MAPK1 and DNA binding of STAT3. Tyrosine phosphorylation is induced by both EGF and insulin (By. similarity).

The protein localises to the nucleus. The protein resides in the cytoplasm. Its subcellular location is the golgi apparatus membrane. It is found in the cell membrane. It localises to the membrane. The protein localises to the caveola. May act as a scaffolding protein within caveolar membranes. Interacts directly with G-protein alpha subunits and can functionally regulate their activity. Acts as an accessory protein in conjunction with CAV1 in targeting to lipid rafts and driving caveolae formation. The Ser-36 phosphorylated form has a role in modulating mitosis in endothelial cells. Positive regulator of cellular mitogenesis of the MAPK signaling pathway. Required for the insulin-stimulated nuclear translocation and activation of MAPK1 and STAT3, and the subsequent regulation of cell cycle progression. The protein is Caveolin-2 (CAV2) of Gorilla gorilla gorilla (Western lowland gorilla).